We begin with the raw amino-acid sequence, 362 residues long: Notoamide biosynthesis cluster protein J' (362 aa).

The N-terminal stretch at 1-22 (MRNMATMLHLLTLILLTSPAST) is a signal peptide. N-linked (GlcNAc...) asparagine glycosylation is found at Asn157, Asn190, Asn280, and Asn338.

Its function is as follows. Part of the gene cluster that mediates the biosynthesis of notoamide, a fungal indole alkaloid that belongs to a family of natural products containing a characteristic bicyclo[2.2.2]diazaoctane core. The first step of notoamide biosynthesis involves coupling of L-proline and L-tryptophan by the bimodular NRPS notE', to produce cyclo-L-tryptophan-L-proline called brevianamide F. The reverse prenyltransferase notF' then acts as a deoxybrevianamide E synthase and converts brevianamide F to deoxybrevianamide E via reverse prenylation at C-2 of the indole ring leading to the bicyclo[2.2.2]diazaoctane core. Deoxybrevianamide E is further hydroxylated at C-6 of the indole ring, likely catalyzed by the cytochrome P450 monooxygenase notG', to yield 6-hydroxy-deoxybrevianamide E. 6-hydroxy-deoxybrevianamide E is a specific substrate of the prenyltransferase notC' for normal prenylation at C-7 to produce 6-hydroxy-7-prenyl-deoxybrevianamide, also called notoamide S. As the proposed pivotal branching point in notoamide biosynthesis, notoamide S can be diverted to notoamide E through an oxidative pyran ring closure putatively catalyzed by either notH' cytochrome P450 monooxygenase or the notD' FAD-linked oxidoreductase. This step would be followed by an indole 2,3-epoxidation-initiated pinacol-like rearrangement catalyzed by the notB' FAD-dependent monooxygenase leading to the formation of notoamide C and notoamide D. On the other hand notoamide S is converted to notoamide T by notH' (or notD'), a bifunctional oxidase that also functions as the intramolecular Diels-Alderase responsible for generation of (-)-notoamide T. To generate antipodal (+)-notoaminide T, notH (or notD) in Aspergillus strain MF297-2 is expected to catalyze a Diels-Alder reaction leading to the opposite stereochemistry. The remaining oxidoreductase notD' (or notH') likely catalyzes the oxidative pyran ring formation to yield (-)-stephacidin A. The FAD-dependent monooxygenase notI' is highly similar to notB' and is predicted to catalyze a similar conversion from (-)-stephacidin A to (+)-notoamide B via the 2,3-epoxidation of (-)-stephacidin A followed by a pinacol-type rearrangement. Finally, it remains unclear which enzyme could be responsible for the final hydroxylation steps leading to notoamide A and sclerotiamide. The function of notJ' in the notoamide biosynthesis has not been determined yet. The sequence is that of Notoamide biosynthesis cluster protein J' from Aspergillus versicolor.